Here is a 248-residue protein sequence, read N- to C-terminus: Probable transcriptional regulatory protein RL3983 (248 aa).

This sequence belongs to the TACO1 family.

The protein localises to the cytoplasm. The polypeptide is Probable transcriptional regulatory protein RL3983 (Rhizobium johnstonii (strain DSM 114642 / LMG 32736 / 3841) (Rhizobium leguminosarum bv. viciae)).